A 406-amino-acid polypeptide reads, in one-letter code: Prisilkin-39 (406 aa).

The signal sequence occupies residues 1 to 19 (MKGFLTLLLVCAILSTGYC). A run of 2 helical transmembrane segments spans residues 26 to 48 (ALTG…GAGA) and 58 to 80 (VGVG…YGGY). Positions 78 to 197 (GGYSGYGYGY…YSGYSYGYPT (120 aa)) are 10 X 12 AA tandem repeat of G-G-Y-[SG]-G-Y-[GS]-Y-G-Y-P-[AT].

In terms of tissue distribution, expression is confined to the prism and organic layers of the shell with no expression detected in the nacreous shell layer. Also expressed in the mantle edge, extrapallial fluid, hemolymph and, to a lesser extent, in the viscus (at protein level). In the mantle, localizes to inner epithelial cells of the outer fold and the outer epithelial cells of the middle fold at the bottom of the periostracal groove.

It is found in the membrane. Its function is as follows. Binds chitin and may serve as a framework constituent participating in shell formation. Inhibits aragonite precipitation and may regulate aragonite growth during shell layer formation. Does not affect calcite crystallization. This Pinctada fucata (Akoya pearl oyster) protein is Prisilkin-39.